The chain runs to 317 residues: Melanocyte-stimulating hormone receptor (317 aa).

Residues 1–37 lie on the Extracellular side of the membrane; that stretch reads MPVLGSQRRLLGSLNCTPPATFPLTLAPNRTGPQCLE. Asparagine 29 is a glycosylation site (N-linked (GlcNAc...) asparagine). The chain crosses the membrane as a helical span at residues 38–63; sequence VSIPDGLFLSLGLVSLVENVLVVAAI. Over 64-72 the chain is Cytoplasmic; it reads AKNRNLHSP. Residues 73-93 traverse the membrane as a helical segment; sequence MYYFICCLAMSDLLVSVSNVL. Residues 94 to 118 are Extracellular-facing; that stretch reads ETAVMLLLEAGALAAQAAVVQQLDN. The helical transmembrane segment at 119–140 threads the bilayer; the sequence is VIDVLICGSMVSSLCFLGAIAV. Over 141–163 the chain is Cytoplasmic; sequence DRYISIFYALRYHSVVTLPRAWR. Residues 164–183 form a helical membrane-spanning segment; it reads IIAAIWVASILTSLLFITYY. Residues 184 to 191 are Extracellular-facing; sequence NHTVVLLC. A helical transmembrane segment spans residues 192-211; that stretch reads LVGFFIAMLALMAVLYVHML. Residues 212-240 are Cytoplasmic-facing; sequence ARACQHARGIARLQKRQRPIHQGFGLKGA. A helical transmembrane segment spans residues 241–266; the sequence is ATLTILLGVFFLCWGPFFLHLSLIVL. At 267-279 the chain is on the extracellular side; it reads CPQHPTCGCIFKN. A helical transmembrane segment spans residues 280–300; the sequence is FNLFLALIICNAIVDPLIYAF. Residues 301-317 lie on the Cytoplasmic side of the membrane; that stretch reads RSQELRKTLQEVLQCSW. Cysteine 315 is lipidated: S-palmitoyl cysteine.

Belongs to the G-protein coupled receptor 1 family. Interacts with MGRN1, but does not undergo MGRN1-mediated ubiquitination; this interaction competes with GNAS-binding and thus inhibits agonist-induced cAMP production. Interacts with OPN3; the interaction results in a decrease in MC1R-mediated cAMP signaling and ultimately a decrease in melanin production in melanocytes.

The protein resides in the cell membrane. Receptor for MSH (alpha, beta and gamma) and ACTH. The activity of this receptor is mediated by G proteins which activate adenylate cyclase. Mediates melanogenesis, the production of eumelanin (black/brown) and phaeomelanin (red/yellow), via regulation of cAMP signaling in melanocytes. This chain is Melanocyte-stimulating hormone receptor (MC1R), found in Dama dama (Fallow deer).